Here is an 89-residue protein sequence, read N- to C-terminus: Small ribosomal subunit protein uS15 (89 aa).

The segment covering 1–11 has biased composition (basic and acidic residues); the sequence is MSIAAERKAEV. Residues 1-25 form a disordered region; the sequence is MSIAAERKAEVIKTSANKPGDTGSP.

The protein belongs to the universal ribosomal protein uS15 family. Part of the 30S ribosomal subunit. Forms a bridge to the 50S subunit in the 70S ribosome, contacting the 23S rRNA.

Functionally, one of the primary rRNA binding proteins, it binds directly to 16S rRNA where it helps nucleate assembly of the platform of the 30S subunit by binding and bridging several RNA helices of the 16S rRNA. Its function is as follows. Forms an intersubunit bridge (bridge B4) with the 23S rRNA of the 50S subunit in the ribosome. This Nitrobacter winogradskyi (strain ATCC 25391 / DSM 10237 / CIP 104748 / NCIMB 11846 / Nb-255) protein is Small ribosomal subunit protein uS15.